Reading from the N-terminus, the 176-residue chain is Peptide methionine sulfoxide reductase MsrA (176 aa).

Cys10 is a catalytic residue.

Belongs to the MsrA Met sulfoxide reductase family.

It catalyses the reaction L-methionyl-[protein] + [thioredoxin]-disulfide + H2O = L-methionyl-(S)-S-oxide-[protein] + [thioredoxin]-dithiol. The enzyme catalyses [thioredoxin]-disulfide + L-methionine + H2O = L-methionine (S)-S-oxide + [thioredoxin]-dithiol. Functionally, has an important function as a repair enzyme for proteins that have been inactivated by oxidation. Catalyzes the reversible oxidation-reduction of methionine sulfoxide in proteins to methionine. The polypeptide is Peptide methionine sulfoxide reductase MsrA (Leptospira borgpetersenii serovar Hardjo-bovis (strain L550)).